A 55-amino-acid chain; its full sequence is Ferredoxin (55 aa).

4Fe-4S ferredoxin-type domains follow at residues 2–27 (YFIT…SPGD) and 28–55 (SVYV…PQQK). Residues C8, C11, C14, C18, C37, C40, C43, and C47 each coordinate [4Fe-4S] cluster.

It depends on [4Fe-4S] cluster as a cofactor.

Ferredoxins are iron-sulfur proteins that transfer electrons in a wide variety of metabolic reactions. This chain is Ferredoxin, found in Acetivibrio thermocellus (Hungateiclostridium thermocellum).